The primary structure comprises 203 residues: Protein GrpE (203 aa).

The segment at 1-38 is disordered; that stretch reads MTQDQTAEQMPAAESADQSADQGPAAESAAPPAVDSER.

This sequence belongs to the GrpE family. Homodimer.

The protein localises to the cytoplasm. Functionally, participates actively in the response to hyperosmotic and heat shock by preventing the aggregation of stress-denatured proteins, in association with DnaK and GrpE. It is the nucleotide exchange factor for DnaK and may function as a thermosensor. Unfolded proteins bind initially to DnaJ; upon interaction with the DnaJ-bound protein, DnaK hydrolyzes its bound ATP, resulting in the formation of a stable complex. GrpE releases ADP from DnaK; ATP binding to DnaK triggers the release of the substrate protein, thus completing the reaction cycle. Several rounds of ATP-dependent interactions between DnaJ, DnaK and GrpE are required for fully efficient folding. This chain is Protein GrpE, found in Paramagnetospirillum magneticum (strain ATCC 700264 / AMB-1) (Magnetospirillum magneticum).